The sequence spans 552 residues: CTP synthase (552 aa).

Residues 1 to 265 (MTKFVFVTGG…DRIVCEKLAL (265 aa)) form an amidoligase domain region. Serine 13 lines the CTP pocket. A UTP-binding site is contributed by serine 13. ATP is bound by residues 14–19 (SLGKGI) and aspartate 71. Residues aspartate 71 and glutamate 139 each coordinate Mg(2+). CTP-binding positions include 146–148 (DIE), 186–191 (KTKPTQ), and lysine 222. Residues 186–191 (KTKPTQ) and lysine 222 each bind UTP. The region spanning 290–545 (TIGMVGKYVD…IKAALAHKQA (256 aa)) is the Glutamine amidotransferase type-1 domain. Residue glycine 351 participates in L-glutamine binding. The active-site Nucleophile; for glutamine hydrolysis is the cysteine 378. L-glutamine-binding positions include 379-382 (LGMQ), glutamate 402, and arginine 468. Active-site residues include histidine 518 and glutamate 520.

Belongs to the CTP synthase family. As to quaternary structure, homotetramer.

The enzyme catalyses UTP + L-glutamine + ATP + H2O = CTP + L-glutamate + ADP + phosphate + 2 H(+). It carries out the reaction L-glutamine + H2O = L-glutamate + NH4(+). The catalysed reaction is UTP + NH4(+) + ATP = CTP + ADP + phosphate + 2 H(+). The protein operates within pyrimidine metabolism; CTP biosynthesis via de novo pathway; CTP from UDP: step 2/2. Its activity is regulated as follows. Allosterically activated by GTP, when glutamine is the substrate; GTP has no effect on the reaction when ammonia is the substrate. The allosteric effector GTP functions by stabilizing the protein conformation that binds the tetrahedral intermediate(s) formed during glutamine hydrolysis. Inhibited by the product CTP, via allosteric rather than competitive inhibition. Catalyzes the ATP-dependent amination of UTP to CTP with either L-glutamine or ammonia as the source of nitrogen. Regulates intracellular CTP levels through interactions with the four ribonucleotide triphosphates. The polypeptide is CTP synthase (Herminiimonas arsenicoxydans).